The primary structure comprises 245 residues: UPF0280 protein UNCMA_16740 (245 aa).

The protein belongs to the UPF0280 family.

The polypeptide is UPF0280 protein UNCMA_16740 (Methanocella arvoryzae (strain DSM 22066 / NBRC 105507 / MRE50)).